The chain runs to 443 residues: Deoxyguanosinetriphosphate triphosphohydrolase-like protein (443 aa).

Residues 66–259 (RLTHSLEAAQ…MELADDIAYG (194 aa)) form the HD domain.

This sequence belongs to the dGTPase family. Type 2 subfamily.

In Vibrio vulnificus (strain CMCP6), this protein is Deoxyguanosinetriphosphate triphosphohydrolase-like protein.